The sequence spans 241 residues: Fatty acid metabolism regulator protein (241 aa).

Residues glutamine 11 to isoleucine 79 form the HTH gntR-type domain. The segment at residues glutamate 39 to glutamine 58 is a DNA-binding region (H-T-H motif).

As to quaternary structure, homodimer.

The protein localises to the cytoplasm. Multifunctional regulator of fatty acid metabolism. This is Fatty acid metabolism regulator protein from Haemophilus influenzae (strain 86-028NP).